The following is a 134-amino-acid chain: Putative nickel-responsive regulator (134 aa).

The Ni(2+) site is built by H78, H89, H91, and C97.

Belongs to the transcriptional regulatory CopG/NikR family. The cofactor is Ni(2+).

Transcriptional regulator. The polypeptide is Putative nickel-responsive regulator (Chlorobium limicola (strain DSM 245 / NBRC 103803 / 6330)).